The chain runs to 102 residues: Small ribosomal subunit protein uS10 (102 aa).

This sequence belongs to the universal ribosomal protein uS10 family. In terms of assembly, part of the 30S ribosomal subunit.

In terms of biological role, involved in the binding of tRNA to the ribosomes. This is Small ribosomal subunit protein uS10 from Symbiobacterium thermophilum (strain DSM 24528 / JCM 14929 / IAM 14863 / T).